The chain runs to 179 residues: Large ribosomal subunit protein uL5 (179 aa).

Belongs to the universal ribosomal protein uL5 family. Part of the 50S ribosomal subunit; part of the 5S rRNA/L5/L18/L25 subcomplex. Contacts the 5S rRNA and the P site tRNA. Forms a bridge to the 30S subunit in the 70S ribosome.

Its function is as follows. This is one of the proteins that bind and probably mediate the attachment of the 5S RNA into the large ribosomal subunit, where it forms part of the central protuberance. In the 70S ribosome it contacts protein S13 of the 30S subunit (bridge B1b), connecting the 2 subunits; this bridge is implicated in subunit movement. Contacts the P site tRNA; the 5S rRNA and some of its associated proteins might help stabilize positioning of ribosome-bound tRNAs. The chain is Large ribosomal subunit protein uL5 from Geobacter sp. (strain M21).